Reading from the N-terminus, the 165-residue chain is Cyclic pyranopterin monophosphate synthase (165 aa).

Substrate contacts are provided by residues 76–78 (LCH) and 114–115 (ME). Residue aspartate 129 is part of the active site.

This sequence belongs to the MoaC family. As to quaternary structure, homohexamer; trimer of dimers.

The catalysed reaction is (8S)-3',8-cyclo-7,8-dihydroguanosine 5'-triphosphate = cyclic pyranopterin phosphate + diphosphate. It participates in cofactor biosynthesis; molybdopterin biosynthesis. In terms of biological role, catalyzes the conversion of (8S)-3',8-cyclo-7,8-dihydroguanosine 5'-triphosphate to cyclic pyranopterin monophosphate (cPMP). The polypeptide is Cyclic pyranopterin monophosphate synthase (Brucella melitensis biotype 2 (strain ATCC 23457)).